Consider the following 286-residue polypeptide: ATP synthase gamma chain (286 aa).

The protein belongs to the ATPase gamma chain family. F-type ATPases have 2 components, CF(1) - the catalytic core - and CF(0) - the membrane proton channel. CF(1) has five subunits: alpha(3), beta(3), gamma(1), delta(1), epsilon(1). CF(0) has three main subunits: a, b and c.

The protein localises to the cell inner membrane. Its function is as follows. Produces ATP from ADP in the presence of a proton gradient across the membrane. The gamma chain is believed to be important in regulating ATPase activity and the flow of protons through the CF(0) complex. This chain is ATP synthase gamma chain, found in Shewanella loihica (strain ATCC BAA-1088 / PV-4).